The primary structure comprises 176 residues: Glutamyl-tRNA(Gln) amidotransferase subunit F, mitochondrial (176 aa).

This sequence belongs to the GatF family. As to quaternary structure, subunit of the heterotrimeric GatFAB amidotransferase (AdT) complex, composed of A, B and F subunits.

It localises to the mitochondrion inner membrane. The catalysed reaction is L-glutamyl-tRNA(Gln) + L-glutamine + ATP + H2O = L-glutaminyl-tRNA(Gln) + L-glutamate + ADP + phosphate + H(+). Allows the formation of correctly charged Gln-tRNA(Gln) through the transamidation of misacylated Glu-tRNA(Gln) in the mitochondria. The reaction takes place in the presence of glutamine and ATP through an activated gamma-phospho-Glu-tRNA(Gln). Required for proper protein synthesis within the mitochondrion. The sequence is that of Glutamyl-tRNA(Gln) amidotransferase subunit F, mitochondrial from Yarrowia lipolytica (strain CLIB 122 / E 150) (Yeast).